Reading from the N-terminus, the 136-residue chain is Putative pre-16S rRNA nuclease (136 aa).

The protein belongs to the YqgF nuclease family.

It localises to the cytoplasm. Could be a nuclease involved in processing of the 5'-end of pre-16S rRNA. This Francisella philomiragia subsp. philomiragia (strain ATCC 25017 / CCUG 19701 / FSC 153 / O#319-036) protein is Putative pre-16S rRNA nuclease.